We begin with the raw amino-acid sequence, 101 residues long: Small ribosomal subunit protein uS14 (101 aa).

The segment at 1–20 is disordered; the sequence is MAKTSAVNRNKMRERMASRD. Residues 11 to 20 are compositionally biased toward basic and acidic residues; that stretch reads KMRERMASRD.

The protein belongs to the universal ribosomal protein uS14 family. Part of the 30S ribosomal subunit. Contacts proteins S3 and S10.

Its function is as follows. Binds 16S rRNA, required for the assembly of 30S particles and may also be responsible for determining the conformation of the 16S rRNA at the A site. This Granulibacter bethesdensis (strain ATCC BAA-1260 / CGDNIH1) protein is Small ribosomal subunit protein uS14.